A 112-amino-acid polypeptide reads, in one-letter code: Ribonuclease P protein component (112 aa).

It belongs to the RnpA family. In terms of assembly, consists of a catalytic RNA component (M1 or rnpB) and a protein subunit.

The catalysed reaction is Endonucleolytic cleavage of RNA, removing 5'-extranucleotides from tRNA precursor.. Functionally, RNaseP catalyzes the removal of the 5'-leader sequence from pre-tRNA to produce the mature 5'-terminus. It can also cleave other RNA substrates such as 4.5S RNA. The protein component plays an auxiliary but essential role in vivo by binding to the 5'-leader sequence and broadening the substrate specificity of the ribozyme. This is Ribonuclease P protein component from Clostridium kluyveri (strain ATCC 8527 / DSM 555 / NBRC 12016 / NCIMB 10680 / K1).